We begin with the raw amino-acid sequence, 784 residues long: Toll-like receptor 2 (784 aa).

An N-terminal signal peptide occupies residues 1–20; that stretch reads MPHTLWMVWVLGVIISLSKE. Residues 21-587 are Extracellular-facing; it reads ESSNQASLSC…VRLSVSECHR (567 aa). C30 and C36 are disulfide-bonded. 19 LRR repeats span residues 54 to 77, 78 to 101, 102 to 125, 126 to 150, 151 to 175, 176 to 199, 200 to 223, 224 to 250, 251 to 278, 279 to 308, 309 to 337, 338 to 361, 362 to 388, 389 to 414, 415 to 437, 438 to 457, 458 to 478, 479 to 500, and 501 to 524; these read VKSLDLSNNRITYISNSDLQRCVN, LQALVLTSNGINTIEEDSFSSLGS, LEHLDLSYNYLSNLSSSWFKPLSS, LTFLNLLGNPYKTLGETSLFSHLTK, LQILRVGNMDTFTKIQRKDFAGLTF, LEELEIDASDLQSYEPKSLKSIQN, VSHLILHMKQHILLLEIFVDVTSS, VECLELRDTDLDTFHFSELSTGETNSL, IKKFTFRNVKITDESLFQVMKLLNQISG, LLELEFDDCTLNGVGNFRASDNDRVIDPGK, VETLTIRRLHIPRFYLFYDLSTLYSLTER, VKRITVENSKVFLVPCLLSQHLKS, LEYLDLSENLMVEEYLKNSACEDAWPS, LQTLILRQNHLASLEKTGETLLTLKN, LTNVDISKNSFHSMPETCQWPEK, MKYLNLSSTRIHSVTGCIPK, TLEILDVSNNNLNLFSLNLPQ, LKELYISRNKLMTLPDASLLPM, and LLVLKISRNAITTFSKEQLDSFHT. N114 carries an N-linked (GlcNAc...) asparagine glycan. N-linked (GlcNAc...) asparagine glycosylation occurs at N199. C353 and C382 are disulfide-bonded. N-linked (GlcNAc...) asparagine glycosylation occurs at N414. C432 and C454 are oxidised to a cystine. N-linked (GlcNAc...) asparagine glycosylation is present at N442. Residues 525-579 form the LRRCT domain; sequence LKTLEAGGNNFICSCEFLSFTQEQQALAKVLIDWPANYLCDSPSHVRGQQVQDVR. Residues 588-608 traverse the membrane as a helical segment; it reads TALVSGMCCALFLLILLTGVL. The Cytoplasmic segment spans residues 609–784; the sequence is CHRFHGLWYM…WVNLRAAIKS (176 aa). A TIR domain is found at 639–782; that stretch reads ICYDAFVSYS…GFWVNLRAAI (144 aa). K754 participates in a covalent cross-link: Glycyl lysine isopeptide (Lys-Gly) (interchain with G-Cter in ubiquitin). The ATG16L1-binding motif signature appears at 761–778; that stretch reads YLEWPMDEAQREGFWVNL.

This sequence belongs to the Toll-like receptor family. In terms of assembly, interacts with LY96, TLR1 and TLR6 (via extracellular domain). TLR2 seems to exist in heterodimers with either TLR1 or TLR6 before stimulation by the ligand. The heterodimers form bigger oligomers in response to their corresponding ligands as well as further heterotypic associations with other receptors such as CD14 and/or CD36. Binds MYD88 (via TIR domain). Interacts with TICAM1. Interacts with CNPY3. Interacts with ATG16L1. Interacts with PPP1R11. Interacts with TICAM2. Interacts with TIRAP. Ubiquitinated at Lys-754 by PPP1R11, leading to its degradation. Deubiquitinated by USP2. Post-translationally, glycosylation of Asn-442 is critical for secretion of the N-terminal ectodomain of TLR2.

It localises to the membrane. The protein resides in the cytoplasmic vesicle. It is found in the phagosome membrane. Its subcellular location is the membrane raft. Cooperates with LY96 to mediate the innate immune response to bacterial lipoproteins and other microbial cell wall components. Cooperates with TLR1 or TLR6 to mediate the innate immune response to bacterial lipoproteins or lipopeptides. Acts via MYD88 and TRAF6, leading to NF-kappa-B activation, cytokine secretion and the inflammatory response. May also promote apoptosis in response to lipoproteins. Forms activation clusters composed of several receptors depending on the ligand, these clusters trigger signaling from the cell surface and subsequently are targeted to the Golgi in a lipid-raft dependent pathway. Forms the cluster TLR2:TLR6:CD14:CD36 in response to diacylated lipopeptides and TLR2:TLR1:CD14 in response to triacylated lipopeptides. This is Toll-like receptor 2 (TLR2) from Gorilla gorilla gorilla (Western lowland gorilla).